The primary structure comprises 223 residues: Deoxyribose-phosphate aldolase (223 aa).

The active-site Proton donor/acceptor is the Asp-91. Residue Lys-153 is the Schiff-base intermediate with acetaldehyde of the active site. The Proton donor/acceptor role is filled by Lys-182.

It belongs to the DeoC/FbaB aldolase family. DeoC type 1 subfamily.

It localises to the cytoplasm. It carries out the reaction 2-deoxy-D-ribose 5-phosphate = D-glyceraldehyde 3-phosphate + acetaldehyde. Its pathway is carbohydrate degradation; 2-deoxy-D-ribose 1-phosphate degradation; D-glyceraldehyde 3-phosphate and acetaldehyde from 2-deoxy-alpha-D-ribose 1-phosphate: step 2/2. Catalyzes a reversible aldol reaction between acetaldehyde and D-glyceraldehyde 3-phosphate to generate 2-deoxy-D-ribose 5-phosphate. The protein is Deoxyribose-phosphate aldolase of Streptococcus agalactiae serotype V (strain ATCC BAA-611 / 2603 V/R).